The following is a 132-amino-acid chain: 3-aminoacrylate deaminase RutC (132 aa).

This sequence belongs to the RutC family.

The enzyme catalyses (Z)-3-aminoacrylate + H2O + H(+) = 3-oxopropanoate + NH4(+). Involved in pyrimidine catabolism. Catalyzes the deamination of 3-aminoacrylate to malonic semialdehyde, a reaction that can also occur spontaneously. RutC may facilitate the reaction and modulate the metabolic fitness, rather than catalyzing essential functions. The sequence is that of 3-aminoacrylate deaminase RutC from Cronobacter sakazakii (strain ATCC BAA-894) (Enterobacter sakazakii).